Consider the following 244-residue polypeptide: Phosphoadenosine 5'-phosphosulfate reductase (244 aa).

The Nucleophile; cysteine thiosulfonate intermediate role is filled by C239.

It belongs to the PAPS reductase family. CysH subfamily.

The protein localises to the cytoplasm. It carries out the reaction [thioredoxin]-disulfide + sulfite + adenosine 3',5'-bisphosphate + 2 H(+) = [thioredoxin]-dithiol + 3'-phosphoadenylyl sulfate. The protein operates within sulfur metabolism; hydrogen sulfide biosynthesis; sulfite from sulfate: step 3/3. Its function is as follows. Catalyzes the formation of sulfite from phosphoadenosine 5'-phosphosulfate (PAPS) using thioredoxin as an electron donor. This is Phosphoadenosine 5'-phosphosulfate reductase from Escherichia coli O157:H7.